A 309-amino-acid polypeptide reads, in one-letter code: p-hydroxybenzoic acid efflux pump subunit AaeA (309 aa).

Residues 12–32 (AITVVLVILAFIAIFNAWVYY) traverse the membrane as a helical segment.

Belongs to the membrane fusion protein (MFP) (TC 8.A.1) family.

It localises to the cell inner membrane. Functionally, forms an efflux pump with AaeB. This chain is p-hydroxybenzoic acid efflux pump subunit AaeA, found in Escherichia coli O157:H7.